The following is a 285-amino-acid chain: MKFVGAHVSAAGGVDQAVIRAHELEATAFALFTKNQRQWRAAPLAEDVIEKFKLTCEKYGYTSAQILPHDSYLINLGHPVTEALEKSREAFIDELVRCQQLGLSLLNFHPGSHLLQIDEDQCLARIAESINIALDATEGVTAVIENTAGQGSNLGFKFEHLAAIIEKVEDKSRVGVCIDTCHAFAAGYDLRTEEDCEHTFAALGKIVGFQYLRGMHLNDAKSEFNSRVDRHHSLGEGNIGKTVFSYIMRDSRFDNIPLILETVNMDIWAEEIAWLKSQTEIEPSL.

Residues histidine 69, histidine 109, glutamate 145, aspartate 179, histidine 182, histidine 216, aspartate 229, histidine 231, and glutamate 261 each contribute to the Zn(2+) site.

The protein belongs to the AP endonuclease 2 family. It depends on Zn(2+) as a cofactor.

It carries out the reaction Endonucleolytic cleavage to 5'-phosphooligonucleotide end-products.. Its function is as follows. Endonuclease IV plays a role in DNA repair. It cleaves phosphodiester bonds at apurinic or apyrimidinic (AP) sites, generating a 3'-hydroxyl group and a 5'-terminal sugar phosphate. This Yersinia pseudotuberculosis serotype O:1b (strain IP 31758) protein is Probable endonuclease 4.